A 171-amino-acid polypeptide reads, in one-letter code: S-ribosylhomocysteine lyase (171 aa).

Residues histidine 54, histidine 58, and cysteine 128 each coordinate Fe cation.

It belongs to the LuxS family. Homodimer. The cofactor is Fe cation.

The catalysed reaction is S-(5-deoxy-D-ribos-5-yl)-L-homocysteine = (S)-4,5-dihydroxypentane-2,3-dione + L-homocysteine. In terms of biological role, involved in the synthesis of autoinducer 2 (AI-2) which is secreted by bacteria and is used to communicate both the cell density and the metabolic potential of the environment. The regulation of gene expression in response to changes in cell density is called quorum sensing. Catalyzes the transformation of S-ribosylhomocysteine (RHC) to homocysteine (HC) and 4,5-dihydroxy-2,3-pentadione (DPD). The sequence is that of S-ribosylhomocysteine lyase from Pectobacterium atrosepticum (strain SCRI 1043 / ATCC BAA-672) (Erwinia carotovora subsp. atroseptica).